The chain runs to 532 residues: Glucan synthesis regulatory protein (532 aa).

The segment at 374-532 (TANKRKSMAP…DAEDMKDIEI (159 aa)) is disordered. The segment covering 381-393 (MAPSMASASGMRS) has biased composition (low complexity). A compositionally biased stretch (polar residues) spans 447-457 (PTTSLTASNAS). A compositionally biased stretch (basic and acidic residues) spans 475-516 (SGEHSKEDIKVNEDSPAKERTSEDKEKKPETEANGKATESKG).

The protein belongs to the KNR4/SMI1 family.

Its function is as follows. Involved in the regulation of 1,3-beta-glucan synthase activity and cell-wall formation. This chain is Glucan synthesis regulatory protein (cot-2), found in Neurospora crassa (strain ATCC 24698 / 74-OR23-1A / CBS 708.71 / DSM 1257 / FGSC 987).